A 477-amino-acid chain; its full sequence is Cysteine--tRNA ligase (477 aa).

Position 29 (Cys-29) interacts with Zn(2+). The short motif at 31-41 (PTVYDYPHLGH) is the 'HIGH' region element. Zn(2+) contacts are provided by Cys-209, His-234, and Glu-238. The 'KMSKS' region signature appears at 266–270 (KMSKS). Lys-269 serves as a coordination point for ATP.

Belongs to the class-I aminoacyl-tRNA synthetase family. Zn(2+) is required as a cofactor.

It localises to the cytoplasm. It carries out the reaction tRNA(Cys) + L-cysteine + ATP = L-cysteinyl-tRNA(Cys) + AMP + diphosphate. The sequence is that of Cysteine--tRNA ligase (cysS) from Pyrococcus abyssi (strain GE5 / Orsay).